Reading from the N-terminus, the 274-residue chain is MALIKTKPTSAGRRFVVKTIDTRLHKGNPHSALVEVQSHSGGRNNLGRVTRRHQGGGHKSHYRLVDFKRNKLDIPGKVERLEYDPNRSAHIALICYVDGERRYILAAKGMSVGDPVLSAEQTPIKPGNCMPLRGIPVGSVVHNVEMRPGKGGQIARSAGASVQLMAREGDYAQLRLRSGEVRRIHVSCRATIGEVGNEEHGSRQLGKAGATRWRGVRPTVRGVAMNPVDHPHGGGEGRTSGGRHPVSPWGQPTKGYRTRRNKRTSNMIVRRRSR.

Disordered stretches follow at residues 40-59 (SGGR…GGHK) and 223-274 (VAMN…RRSR). Basic residues-rich tracts occupy residues 49 to 59 (VTRRHQGGGHK) and 256 to 274 (YRTR…RRSR).

It belongs to the universal ribosomal protein uL2 family. As to quaternary structure, part of the 50S ribosomal subunit. Forms a bridge to the 30S subunit in the 70S ribosome.

One of the primary rRNA binding proteins. Required for association of the 30S and 50S subunits to form the 70S ribosome, for tRNA binding and peptide bond formation. It has been suggested to have peptidyltransferase activity; this is somewhat controversial. Makes several contacts with the 16S rRNA in the 70S ribosome. This is Large ribosomal subunit protein uL2 from Acidithiobacillus ferrooxidans (strain ATCC 23270 / DSM 14882 / CIP 104768 / NCIMB 8455) (Ferrobacillus ferrooxidans (strain ATCC 23270)).